A 185-amino-acid polypeptide reads, in one-letter code: Endonuclease IV (185 aa).

The enzyme catalyses Endonucleolytic cleavage of the 5' phosphodiester bond of deoxycytidine in single-stranded DNA.. Cleaves single-stranded DNA in a dC-specific manner. The cleavage occurs exclusively at the 5'-proximal position (dC1) within a dCs tract having a minimal size of 6 bases. These specific cleavages may have a detrimental effect on the replication of host dC-containing DNA. The polypeptide is Endonuclease IV (denB) (Enterobacteria phage T4 (Bacteriophage T4)).